Consider the following 430-residue polypeptide: 3-phosphoshikimate 1-carboxyvinyltransferase (430 aa).

The 3-phosphoshikimate site is built by lysine 25, serine 26, and arginine 30. Lysine 25 provides a ligand contact to phosphoenolpyruvate. 2 residues coordinate phosphoenolpyruvate: glycine 98 and arginine 126. 6 residues coordinate 3-phosphoshikimate: serine 169, serine 170, glutamine 171, serine 198, glutamate 313, and histidine 342. Glutamine 171 lines the phosphoenolpyruvate pocket. The Proton acceptor role is filled by glutamate 313. Phosphoenolpyruvate is bound by residues arginine 346, arginine 387, and lysine 412.

It belongs to the EPSP synthase family. As to quaternary structure, monomer.

It localises to the cytoplasm. The enzyme catalyses 3-phosphoshikimate + phosphoenolpyruvate = 5-O-(1-carboxyvinyl)-3-phosphoshikimate + phosphate. It functions in the pathway metabolic intermediate biosynthesis; chorismate biosynthesis; chorismate from D-erythrose 4-phosphate and phosphoenolpyruvate: step 6/7. Its function is as follows. Catalyzes the transfer of the enolpyruvyl moiety of phosphoenolpyruvate (PEP) to the 5-hydroxyl of shikimate-3-phosphate (S3P) to produce enolpyruvyl shikimate-3-phosphate and inorganic phosphate. This Mycobacterium leprae (strain TN) protein is 3-phosphoshikimate 1-carboxyvinyltransferase.